The primary structure comprises 710 residues: MEEMEEELKCPVCGSFYREPIILPCSHNLCQACARNILVQTPESESPQSRRASGSGVSDYDYLDLDKMSLYSEADSGYGSYGGFASAPTTPCQKSPNGVRVFPPAMPPPPTHLSPALAPVPRNSCITCPQCHRSLILDDRGLRGFPKNRVLEGVIDRYQQSKAAALKCQLCEKAPKEATVMCEQCDVFYCDPCRLRCHPPRGPLAKHRLVPPAQGRVSRRLSPRKVSTCTDHELENHSMYCVQCKMPVCYQCLEEGKHSSHEVKALGAMWKLHKSQLSQALNGLSDRAKEAKEFLVQLRTMVQQIQENSVEFEACLVAQCDALIDALNRRKAQLLARVNKEHEHKLKVVRDQISHCTVKLRQTTGLMEYCLEVIKENDPSGFLQISDALIRRVHLTEDQWGKGTLTPRMTTDFDLSLDNSPLLQSIHQLDFVQVKASSPVPATPILQLEECCTHNNSATLSWKQPPLSTVAADGYILELDDGSGGQFREVYVGKETMCTVDGLHFNSTYNARVKAFNKTGVSPYSKTLVLQTSEVAWFAFDPGSAHSDIIFSNDNLTVTCSSYDDRVVLGKTGFSKGVHYWELTIDRYDNHPDPAFGVARIDVMKDMMLGKDDKAWAMYVDNNRSWFMHNNSHTNRTEGGITKGATIGVLLDLNRKTLTFFVNNEQQGPIAFENVEGLFFPAVSLNRNVQVTLHTGLPVPDFYSSRASIA.

The segment at 10–50 (CPVCGSFYREPIILPCSHNLCQACARNILVQTPESESPQSR) adopts an RING-type zinc-finger fold. Residue Thr41 is modified to Phosphothreonine. Phosphoserine occurs at positions 44, 46, 49, and 53. 2 B box-type zinc fingers span residues 163–212 (AAAL…LVPP) and 224–266 (RKVS…VKAL). Cys168, Cys171, Cys193, His198, Cys229, His232, Cys252, and His258 together coordinate Zn(2+). Residues 273–340 (HKSQLSQALN…KAQLLARVNK (68 aa)) are a coiled coil. A COS domain is found at 374–432 (IKENDPSGFLQISDALIRRVHLTEDQWGKGTLTPRMTTDFDLSLDNSPLLQSIHQLDFV). Residues 440–535 (VPATPILQLE…KTLVLQTSEV (96 aa)) form the Fibronectin type-III domain. Residues 533–702 (SEVAWFAFDP…LHTGLPVPDF (170 aa)) enclose the B30.2/SPRY domain.

In terms of assembly, interacts with SNAP25. Post-translationally, auto-ubiquitinated. Brain (at protein level). Expressed in fetal and adult brain.

The protein resides in the cytoplasmic vesicle. It localises to the secretory vesicle. Its subcellular location is the synaptic vesicle. It is found in the synapse. The protein localises to the cytoplasm. The protein resides in the cytoskeleton. It localises to the cell projection. Its subcellular location is the dendrite. The catalysed reaction is S-ubiquitinyl-[E2 ubiquitin-conjugating enzyme]-L-cysteine + [acceptor protein]-L-lysine = [E2 ubiquitin-conjugating enzyme]-L-cysteine + N(6)-ubiquitinyl-[acceptor protein]-L-lysine.. It functions in the pathway protein modification; protein ubiquitination. Functionally, E3 ubiquitin-protein ligase which ubiquitinates itself in cooperation with an E2 enzyme UBE2D2/UBC4 and serves as a targeting signal for proteasomal degradation. May play a role in regulation of neuronal functions. May act as a regulator of synaptic vesicle exocytosis by controlling the availability of SNAP25 for the SNARE complex formation. The protein is E3 ubiquitin-protein ligase TRIM9 (Trim9) of Rattus norvegicus (Rat).